The primary structure comprises 113 residues: Photosystem II reaction center Psb28 protein (113 aa).

Belongs to the Psb28 family. Part of the photosystem II complex.

It is found in the cellular thylakoid membrane. This is Photosystem II reaction center Psb28 protein from Prochlorococcus marinus (strain NATL2A).